We begin with the raw amino-acid sequence, 437 residues long: NADH-ubiquinone oxidoreductase chain 4 (437 aa).

13 helical membrane-spanning segments follow: residues 8 to 28 (GASI…AFII), 50 to 70 (LTPI…LVLI), 78 to 98 (YKYI…FCVC), 100 to 120 (FLTF…LILL), 132 to 152 (FYLM…LLYL), 177 to 197 (LVGL…HLWL), 212 to 232 (LAGV…NFII), 239 to 259 (VISV…IICI), 266 to 286 (ALVA…ILMM), 297 to 317 (TMIA…LSYL), 324 to 344 (LMFM…WFLF), 361 to 381 (LLII…MCII), and 417 to 437 (HVLT…LFSV).

The protein belongs to the complex I subunit 4 family.

It is found in the mitochondrion membrane. The enzyme catalyses a ubiquinone + NADH + 5 H(+)(in) = a ubiquinol + NAD(+) + 4 H(+)(out). Core subunit of the mitochondrial membrane respiratory chain NADH dehydrogenase (Complex I) that is believed to belong to the minimal assembly required for catalysis. Complex I functions in the transfer of electrons from NADH to the respiratory chain. The immediate electron acceptor for the enzyme is believed to be ubiquinone. This is NADH-ubiquinone oxidoreductase chain 4 (ND4) from Albinaria caerulea (Land snail).